The sequence spans 69 residues: Putative membrane protein insertion efficiency factor (69 aa).

Belongs to the UPF0161 family.

The protein resides in the cell membrane. Functionally, could be involved in insertion of integral membrane proteins into the membrane. This Clostridium botulinum (strain 657 / Type Ba4) protein is Putative membrane protein insertion efficiency factor.